The following is a 451-amino-acid chain: Chromosomal replication initiator protein DnaA (451 aa).

Residues 1 to 94 (MKPDLSSLWQ…KPEPKPAQPS (94 aa)) are domain I, interacts with DnaA modulators. Residues 87 to 106 (EPKPAQPSALPTHHNKEENK) are disordered. The tract at residues 95-113 (ALPTHHNKEENKPQTVIRS) is domain II. Residues 114-331 (YLNPKHVFEN…GALNRVSANA (218 aa)) form a domain III, AAA+ region region. Positions 159, 161, 162, and 163 each coordinate ATP. The interval 332-451 (EFMGAAITID…WSNLIRTLSV (120 aa)) is domain IV, binds dsDNA.

This sequence belongs to the DnaA family. As to quaternary structure, oligomerizes as a right-handed, spiral filament on DNA at oriC.

It is found in the cytoplasm. Plays an essential role in the initiation and regulation of chromosomal replication. ATP-DnaA binds to the origin of replication (oriC) to initiate formation of the DNA replication initiation complex once per cell cycle. Binds the DnaA box (a 9 base pair repeat at the origin) and separates the double-stranded (ds)DNA. Forms a right-handed helical filament on oriC DNA; dsDNA binds to the exterior of the filament while single-stranded (ss)DNA is stabiized in the filament's interior. The ATP-DnaA-oriC complex binds and stabilizes one strand of the AT-rich DNA unwinding element (DUE), permitting loading of DNA polymerase. After initiation quickly degrades to an ADP-DnaA complex that is not apt for DNA replication. Binds acidic phospholipids. In Pasteurella multocida (strain Pm70), this protein is Chromosomal replication initiator protein DnaA.